A 158-amino-acid chain; its full sequence is Transcription elongation factor GreA (158 aa).

The stretch at 46–66 forms a coiled coil; that stretch reads AEYEAAKERQGFIEGRISELE.

It belongs to the GreA/GreB family.

Functionally, necessary for efficient RNA polymerase transcription elongation past template-encoded arresting sites. The arresting sites in DNA have the property of trapping a certain fraction of elongating RNA polymerases that pass through, resulting in locked ternary complexes. Cleavage of the nascent transcript by cleavage factors such as GreA or GreB allows the resumption of elongation from the new 3'terminus. GreA releases sequences of 2 to 3 nucleotides. The polypeptide is Transcription elongation factor GreA (Neisseria meningitidis serogroup A / serotype 4A (strain DSM 15465 / Z2491)).